Here is a 308-residue protein sequence, read N- to C-terminus: uncharacterized protein (308 aa).

Residues 43-55 (SQYGTWADQHQNG) are compositionally biased toward polar residues. Residues 43-289 (SQYGTWADQH…KEERSEECSP (247 aa)) form a disordered region. Ser62 carries the post-translational modification Phosphoserine. Over residues 80 to 90 (HLSSYTESTSV) the composition is skewed to polar residues. The segment covering 91–109 (EQRDSSRDRRSSSVDRSSS) has biased composition (basic and acidic residues). The segment covering 136-152 (IHQTSVLDSSALKTRVQ) has biased composition (polar residues). The span at 153–168 (LSKRSRRRAPISHSLR) shows a compositional bias: basic residues. Ser166 is modified (phosphoserine). 2 stretches are compositionally biased toward basic and acidic residues: residues 175–186 (SESRSPLEEESH) and 193–216 (DSTE…ERTP). 4 positions are modified to phosphoserine: Ser205, Ser259, Ser262, and Ser288.

This is an uncharacterized protein from Mus musculus (Mouse).